Consider the following 222-residue polypeptide: Pyridoxal phosphate homeostasis protein (222 aa).

K35 bears the N6-(pyridoxal phosphate)lysine mark.

Belongs to the pyridoxal phosphate-binding protein YggS/PROSC family.

Its function is as follows. Pyridoxal 5'-phosphate (PLP)-binding protein, which is involved in PLP homeostasis. This Helicobacter pylori (strain J99 / ATCC 700824) (Campylobacter pylori J99) protein is Pyridoxal phosphate homeostasis protein.